We begin with the raw amino-acid sequence, 427 residues long: 3-phosphoshikimate 1-carboxyvinyltransferase (427 aa).

3 residues coordinate 3-phosphoshikimate: Lys-22, Ser-23, and Arg-27. Lys-22 lines the phosphoenolpyruvate pocket. Residues Gly-96 and Arg-124 each contribute to the phosphoenolpyruvate site. 3-phosphoshikimate-binding residues include Ser-169, Ser-170, Gln-171, Ser-197, Asp-313, Asn-336, and Lys-340. Residue Gln-171 coordinates phosphoenolpyruvate. Asp-313 (proton acceptor) is an active-site residue. The phosphoenolpyruvate site is built by Arg-344, Arg-386, and Lys-411.

Belongs to the EPSP synthase family. Monomer.

It localises to the cytoplasm. The enzyme catalyses 3-phosphoshikimate + phosphoenolpyruvate = 5-O-(1-carboxyvinyl)-3-phosphoshikimate + phosphate. The protein operates within metabolic intermediate biosynthesis; chorismate biosynthesis; chorismate from D-erythrose 4-phosphate and phosphoenolpyruvate: step 6/7. Catalyzes the transfer of the enolpyruvyl moiety of phosphoenolpyruvate (PEP) to the 5-hydroxyl of shikimate-3-phosphate (S3P) to produce enolpyruvyl shikimate-3-phosphate and inorganic phosphate. In Salmonella choleraesuis (strain SC-B67), this protein is 3-phosphoshikimate 1-carboxyvinyltransferase.